A 248-amino-acid polypeptide reads, in one-letter code: Pulmonary surfactant-associated protein A (248 aa).

Positions 1–20 (MLLCSLTLTLLWMVASGLEC) are cleaved as a signal peptide. A Collagen-like domain is found at 28–100 (GSPGIPGTPG…PGERGPPGFP (73 aa)). Residues 29 to 102 (SPGIPGTPGS…ERGPPGFPAY (74 aa)) are disordered. Proline 30, proline 33, proline 36, proline 42, proline 54, proline 57, proline 63, proline 67, and proline 70 each carry 4-hydroxyproline. Residues 42–51 (PGRDGRDGIK) show a composition bias toward basic and acidic residues. Residues 54–65 (PGPPGPMGPPGG) show a composition bias toward pro residues. Residues 69 to 82 (LPGRDGMTGAPGLP) are compositionally biased toward low complexity. A compositionally biased stretch (basic and acidic residues) spans 84 to 93 (ERGEKGEPGE). A C-type lectin domain is found at 132–248 (LAVGEKVFST…LQYRLAICEF (117 aa)). Disulfide bonds link cysteine 155/cysteine 246 and cysteine 224/cysteine 238. Asparagine 207 carries N-linked (GlcNAc...) asparagine glycosylation. Positions 215, 217, 234, and 235 each coordinate Ca(2+).

Belongs to the SFTPA family. In terms of assembly, oligomeric complex of 6 set of homotrimers.

The protein localises to the secreted. It is found in the extracellular space. It localises to the extracellular matrix. The protein resides in the surface film. In presence of calcium ions, it binds to surfactant phospholipids and contributes to lower the surface tension at the air-liquid interface in the alveoli of the mammalian lung and is essential for normal respiration. Enhances the expression of MYO18A/SP-R210 on alveolar macrophages. The chain is Pulmonary surfactant-associated protein A (SFTPA1) from Bos taurus (Bovine).